A 378-amino-acid chain; its full sequence is 3-dehydroquinate synthase (378 aa).

NAD(+) contacts are provided by residues 115-119, 139-140, K152, and K161; these read GVVGD and TS. Residues E194, H256, and H275 each coordinate Zn(2+).

This sequence belongs to the sugar phosphate cyclases superfamily. Dehydroquinate synthase family. Co(2+) is required as a cofactor. Requires Zn(2+) as cofactor. NAD(+) serves as cofactor.

It localises to the cytoplasm. It carries out the reaction 7-phospho-2-dehydro-3-deoxy-D-arabino-heptonate = 3-dehydroquinate + phosphate. Its pathway is metabolic intermediate biosynthesis; chorismate biosynthesis; chorismate from D-erythrose 4-phosphate and phosphoenolpyruvate: step 2/7. In terms of biological role, catalyzes the conversion of 3-deoxy-D-arabino-heptulosonate 7-phosphate (DAHP) to dehydroquinate (DHQ). In Brucella anthropi (strain ATCC 49188 / DSM 6882 / CCUG 24695 / JCM 21032 / LMG 3331 / NBRC 15819 / NCTC 12168 / Alc 37) (Ochrobactrum anthropi), this protein is 3-dehydroquinate synthase.